A 311-amino-acid chain; its full sequence is 4-hydroxy-3-methylbut-2-enyl diphosphate reductase (311 aa).

[4Fe-4S] cluster is bound at residue Cys12. (2E)-4-hydroxy-3-methylbut-2-enyl diphosphate is bound by residues His41 and His74. The dimethylallyl diphosphate site is built by His41 and His74. Positions 41 and 74 each coordinate isopentenyl diphosphate. Cys96 contacts [4Fe-4S] cluster. Residue His124 coordinates (2E)-4-hydroxy-3-methylbut-2-enyl diphosphate. Residue His124 participates in dimethylallyl diphosphate binding. His124 contributes to the isopentenyl diphosphate binding site. Residue Glu126 is the Proton donor of the active site. Residue Thr168 coordinates (2E)-4-hydroxy-3-methylbut-2-enyl diphosphate. Position 198 (Cys198) interacts with [4Fe-4S] cluster. (2E)-4-hydroxy-3-methylbut-2-enyl diphosphate contacts are provided by Ser226, Ser227, Asn228, and Ser270. 4 residues coordinate dimethylallyl diphosphate: Ser226, Ser227, Asn228, and Ser270. Isopentenyl diphosphate contacts are provided by Ser226, Ser227, Asn228, and Ser270.

Belongs to the IspH family. Requires [4Fe-4S] cluster as cofactor.

The enzyme catalyses isopentenyl diphosphate + 2 oxidized [2Fe-2S]-[ferredoxin] + H2O = (2E)-4-hydroxy-3-methylbut-2-enyl diphosphate + 2 reduced [2Fe-2S]-[ferredoxin] + 2 H(+). It carries out the reaction dimethylallyl diphosphate + 2 oxidized [2Fe-2S]-[ferredoxin] + H2O = (2E)-4-hydroxy-3-methylbut-2-enyl diphosphate + 2 reduced [2Fe-2S]-[ferredoxin] + 2 H(+). It participates in isoprenoid biosynthesis; dimethylallyl diphosphate biosynthesis; dimethylallyl diphosphate from (2E)-4-hydroxy-3-methylbutenyl diphosphate: step 1/1. It functions in the pathway isoprenoid biosynthesis; isopentenyl diphosphate biosynthesis via DXP pathway; isopentenyl diphosphate from 1-deoxy-D-xylulose 5-phosphate: step 6/6. Catalyzes the conversion of 1-hydroxy-2-methyl-2-(E)-butenyl 4-diphosphate (HMBPP) into a mixture of isopentenyl diphosphate (IPP) and dimethylallyl diphosphate (DMAPP). Acts in the terminal step of the DOXP/MEP pathway for isoprenoid precursor biosynthesis. The sequence is that of 4-hydroxy-3-methylbut-2-enyl diphosphate reductase from Saccharophagus degradans (strain 2-40 / ATCC 43961 / DSM 17024).